The sequence spans 688 residues: MAKEFLIELGTEELPPTQLRTLAEAFAANFEAELKGAELAHEGVKWFAAPRRLALKVAALAESQSDKVVEKRGPAVSAAFDAEGNPTKAAQGWARGCGITVDQADRMVTDKGEWLLFKQEVKGQPTSEIVVELAAKALANLPIAKPMRWGNKTTQFIRPVKTLTMLMGSDLIEGEILGVASSRTIRGHRFMGEKEFTIDSAEQYPAILEERGKVMADYEARKAIILADAQKAAAAVGGIADLEDDLVEEVTSLVEWPVVLTAKFEEEFLKVPSEALVYTMKGDQKYFPVYDENKKLLPNFIFVSNIESKEPRYVIEGNEKVVRPRLADAEFFFNTDRKRPLIDRLPELEQAIFQQQLGTIKDKTDRITELAGYIAEQIGADVEKSKRAGLLAKCDLMTSMVFEFTDTQGVMGMHYARHDGEAEEVAVALNEQYMPRFAGDELPSNGVSTAVAMADKLDTIVGIFGIGQAPKGSDPFALRRASLGVLRIIVEYGYNLDLVDLVAKAKSLFGDRLTNDNVEQDVIEFMLGRFRAWYQDEGFSVDIIQAVLARRPTKPADFDQRVKAVSHFRELEAAESLAAANKRVGNILAKFDGELAEEIDLALLQEDAEKALAESVEVMTEALEPAFATGNYQEALSKLADLREPVDAFFDNVMVMADDEALKKNRLTLLNNLRNLFLQIADISLLQK.

The protein belongs to the class-II aminoacyl-tRNA synthetase family. Tetramer of two alpha and two beta subunits.

Its subcellular location is the cytoplasm. The catalysed reaction is tRNA(Gly) + glycine + ATP = glycyl-tRNA(Gly) + AMP + diphosphate. This is Glycine--tRNA ligase beta subunit from Vibrio parahaemolyticus serotype O3:K6 (strain RIMD 2210633).